The following is a 391-amino-acid chain: MVTQNKKILIITGSFGNGHLQVTNSVVNQLNEMNLKHLSVIEHDLFMEAHPILTSICKKYYINSFKYFRNSYKQFYYSRPEDVNKCFYKYYGLNKLINLLIKEKPDLILLTFPTPVMSVLTEQFNMNIPIATVMTDYRLHKNWVTPHSSRYYVATPDLKQEFVNVGVPEDIIKITGIPISEQFDEDIDTKVWMHKNHLDPNRPTILMSAGAFGVSKGFDVMISDILERSPETQIVMICGRNKELKRALRQQFKEYANVLILGYTHHMNEWMASSHLMVTKPGGITISEALARKIPMIFLDPAPGQELENAHYFQSKGMGKIADTTEEAIQLITELTQDENALAHMAEQMQDLKVKYPTYKLCRDLLHLLDHSSQFEEIYGKVPMYAKLFIK.

It belongs to the glycosyltransferase 28 family. UgtP subfamily.

It localises to the cell membrane. The catalysed reaction is a 1,2-diacyl-3-O-(beta-D-glucopyranosyl)-sn-glycerol + UDP-alpha-D-glucose = a 1,2-diacyl-3-O-(beta-D-Glc-(1-&gt;6)-beta-D-Glc)-sn-glycerol + UDP + H(+). It catalyses the reaction a 1,2-diacyl-sn-glycerol + UDP-alpha-D-glucose = a 1,2-diacyl-3-O-(beta-D-glucopyranosyl)-sn-glycerol + UDP + H(+). It participates in glycolipid metabolism; diglucosyl-diacylglycerol biosynthesis. In terms of biological role, processive glucosyltransferase involved in the biosynthesis of both the bilayer- and non-bilayer-forming membrane glucolipids. Is able to successively transfer two glucosyl residues to diacylglycerol (DAG), thereby catalyzing the formation of beta-monoglucosyl-DAG (3-O-(beta-D-glucopyranosyl)-1,2-diacyl-sn-glycerol) and beta-diglucosyl-DAG (3-O-(beta-D-glucopyranosyl-beta-(1-&gt;6)-D-glucopyranosyl)-1,2-diacyl-sn-glycerol). Beta-diglucosyl-DAG is the predominant glycolipid found in Bacillales and is also used as a membrane anchor for lipoteichoic acid (LTA). In Staphylococcus carnosus (strain TM300), this protein is Processive diacylglycerol beta-glucosyltransferase.